A 493-amino-acid polypeptide reads, in one-letter code: Cholesteryl ester transfer protein (493 aa).

The N-terminal stretch at 1-17 is a signal peptide; sequence MLAATVLTLALLGNAHA. Residue asparagine 105 is glycosylated (N-linked (GlcNAc...) (complex) asparagine). An intrachain disulfide couples cysteine 160 to cysteine 201. N-linked (GlcNAc...) asparagine glycans are attached at residues asparagine 257, asparagine 358, and asparagine 413.

Belongs to the BPI/LBP/Plunc superfamily. BPI/LBP family. Expressed by the liver and secreted in plasma.

It localises to the secreted. It carries out the reaction cholesteryl (9Z-octadecenoate)(in) = cholesteryl (9Z-octadecenoate)(out). The enzyme catalyses 1,2,3-tri-(9Z-octadecenoyl)-glycerol(in) = 1,2,3-tri-(9Z-octadecenoyl)-glycerol(out). The catalysed reaction is cholesteryl (9Z,12Z)-octadecadienoate(in) = cholesteryl (9Z,12Z)-octadecadienoate(out). Involved in the transfer of neutral lipids, including cholesteryl ester and triglyceride, among lipoprotein particles. Allows the net movement of cholesteryl ester from high density lipoproteins/HDL to triglyceride-rich very low density lipoproteins/VLDL, and the equimolar transport of triglyceride from VLDL to HDL. Regulates the reverse cholesterol transport, by which excess cholesterol is removed from peripheral tissues and returned to the liver for elimination. The chain is Cholesteryl ester transfer protein from Homo sapiens (Human).